The following is a 1137-amino-acid chain: Nonsense-mediated mRNA decay factor SMG7 (1137 aa).

Serine 2 is modified (N-acetylserine). TPR repeat units follow at residues 152-185 and 187-219; these read QHCL…VPSN and QPYN…KFPF. At serine 520 the chain carries Phosphoserine. The span at 620 to 631 shows a compositional bias: basic and acidic residues; sequence ELRKTPVSEARK. Disordered regions lie at residues 620 to 646, 696 to 794, 890 to 911, 988 to 1055, 1069 to 1089, and 1104 to 1137; these read ELRK…NSQF, LQPT…YQQA, IDRR…VPRM, PSLP…AMGG, SSWH…PSME, and SSSM…NPPH. Threonine 624 carries the phosphothreonine modification. 2 stretches are compositionally biased toward polar residues: residues 633-646 and 696-722; these read PVTQ…NSQF and LQPT…SQQR. Residues 723 to 770 show a composition bias toward low complexity; that stretch reads PSGPGPMNQGPQQSQPPSQQPLTSLPAQPTAQSTSQLQVQALTQQQQS. Phosphoserine is present on residues serine 781 and serine 897. Residues 988–998 show a composition bias toward polar residues; sequence PSLPASSDHST. Positions 999 to 1025 are enriched in low complexity; sequence PASQSPHSSNPSSLPSSPPTHNHNSVP. Residues 1036 to 1050 show a composition bias toward basic and acidic residues; that stretch reads DNRDRRTADRWKTDK. Polar residues predominate over residues 1069–1081; sequence SSWHQASTPSGTW. Low complexity predominate over residues 1117–1131; it reads QLLMQQKQKQQRGQG.

As to quaternary structure, part of a complex that contains SMG5, SMG7, PPP2CA, a short isoform of UPF3A (isoform UPF3AS, but not isoform UPF3AL) and phosphorylated UPF1. Interacts with DHX34; the interaction is RNA-independent.

It localises to the cytoplasm. It is found in the nucleus. Plays a role in nonsense-mediated mRNA decay. Recruits UPF1 to cytoplasmic mRNA decay bodies. Together with SMG5 is thought to provide a link to the mRNA degradation machinery involving exonucleolytic pathways, and to serve as an adapter for UPF1 to protein phosphatase 2A (PP2A), thereby triggering UPF1 dephosphorylation. The polypeptide is Nonsense-mediated mRNA decay factor SMG7 (Homo sapiens (Human)).